Consider the following 239-residue polypeptide: Ribonuclease 3 (239 aa).

The RNase III domain maps to 12 to 137 (RAKLEGLIGH…LIAAIYLDGG (126 aa)). Mg(2+) is bound at residue glutamate 50. Aspartate 54 is a catalytic residue. The Mg(2+) site is built by aspartate 123 and glutamate 126. The active site involves glutamate 126. In terms of domain architecture, DRBM spans 162–231 (DAKTELQEWS…ATKMLEREGI (70 aa)).

It belongs to the ribonuclease III family. As to quaternary structure, homodimer. The cofactor is Mg(2+).

It localises to the cytoplasm. The enzyme catalyses Endonucleolytic cleavage to 5'-phosphomonoester.. Functionally, digests double-stranded RNA. Involved in the processing of primary rRNA transcript to yield the immediate precursors to the large and small rRNAs (23S and 16S). Processes some mRNAs, and tRNAs when they are encoded in the rRNA operon. Processes pre-crRNA and tracrRNA of type II CRISPR loci if present in the organism. In Rhizobium johnstonii (strain DSM 114642 / LMG 32736 / 3841) (Rhizobium leguminosarum bv. viciae), this protein is Ribonuclease 3.